We begin with the raw amino-acid sequence, 706 residues long: Kinesin-like protein KIP2 (706 aa).

Low complexity-rich tracts occupy residues 1 to 28 (MIQKMSPSLRRPSTRSSSGSSNIPQSPS) and 36 to 63 (SNLTRNSIRSTSNSGSQSISASSTRSNS). The interval 1–139 (MIQKMSPSLR…QPRSNSHHGS (139 aa)) is disordered. A Kinesin motor domain is found at 102–493 (SITVTIRPKP…LRFASRAKNV (392 aa)). A compositionally biased stretch (polar residues) spans 127–139 (RYSQPRSNSHHGS). 202–209 (GMTGSGKT) provides a ligand contact to ATP. A disordered region spans residues 413–445 (VGSNIPSPSASGSSSSSGNATNNGTSPSNHIPY). Residues 414–441 (GSNIPSPSASGSSSSSGNATNNGTSPSN) show a composition bias toward low complexity. 3 coiled-coil regions span residues 507–541 (NNDGDKDRTIELLRRQLEEQRRMISELKNRSNIGE), 569–589 (MRAENRVLKYKLENCEKLLDK), and 612–689 (TLLE…RALK).

It belongs to the TRAFAC class myosin-kinesin ATPase superfamily. Kinesin family. As to quaternary structure, might be dimeric.

The protein resides in the cytoplasm. The protein localises to the cytoskeleton. Required for assembly of the mitotic spindle. The polypeptide is Kinesin-like protein KIP2 (KIP2) (Saccharomyces cerevisiae (strain ATCC 204508 / S288c) (Baker's yeast)).